The primary structure comprises 546 residues: Chaperonin GroEL 4 (546 aa).

Residues 30–33 (TLGP), Lys51, 87–91 (DGTTT), Gly415, and Asp496 contribute to the ATP site.

The protein belongs to the chaperonin (HSP60) family. Forms a cylinder of 14 subunits composed of two heptameric rings stacked back-to-back. Interacts with the co-chaperonin GroES.

The protein localises to the cytoplasm. The enzyme catalyses ATP + H2O + a folded polypeptide = ADP + phosphate + an unfolded polypeptide.. Together with its co-chaperonin GroES, plays an essential role in assisting protein folding. The GroEL-GroES system forms a nano-cage that allows encapsulation of the non-native substrate proteins and provides a physical environment optimized to promote and accelerate protein folding. In Bradyrhizobium sp. (strain BTAi1 / ATCC BAA-1182), this protein is Chaperonin GroEL 4.